We begin with the raw amino-acid sequence, 429 residues long: MQNYTVRPAKSVRGEISVPGDKSISHRSIMFGSIASGVTTVTGFLRGEDALATLEAFRAMGVQIDDDGETVTIQGRGLHGLSEPTDVLDCGNSGTSMRLLTGLLAGQNFFSVLSGDKYLRARPMKRVVGPLAQMGARISGRAGGEKAPLAIQGSKLKGIEYDSPVSSAQVKSAIMLAGLYAGGETVVREPHLSRDHSERMLRAFGAHVETFPGGVKVRGGAELTGRDIVVPGDISSAAFFLVAGLIVPGSDLLIRGVGVNPTRTGIIDVLKGMGGDLELINQRDESGEPVADIRVRHSKLTAMEISGDVVPRAIDEFPAICVAASLAQGTTVVRDAAELRVKETDRISAMADNLKRAGVSIVETPDGMEITGVSSLKGCAADSFGDHRIAMSMMVAGLVAQNETSVSDVECIATSFPGFVNLLEGVVQR.

3-phosphoshikimate-binding residues include Lys22, Ser23, and Arg27. Lys22 lines the phosphoenolpyruvate pocket. 2 residues coordinate phosphoenolpyruvate: Gly94 and Arg122. Positions 167, 169, 315, and 342 each coordinate 3-phosphoshikimate. Position 169 (Gln169) interacts with phosphoenolpyruvate. The active-site Proton acceptor is Asp315. Phosphoenolpyruvate-binding residues include Arg346 and Arg388.

It belongs to the EPSP synthase family. Monomer.

The protein resides in the cytoplasm. It catalyses the reaction 3-phosphoshikimate + phosphoenolpyruvate = 5-O-(1-carboxyvinyl)-3-phosphoshikimate + phosphate. The protein operates within metabolic intermediate biosynthesis; chorismate biosynthesis; chorismate from D-erythrose 4-phosphate and phosphoenolpyruvate: step 6/7. Catalyzes the transfer of the enolpyruvyl moiety of phosphoenolpyruvate (PEP) to the 5-hydroxyl of shikimate-3-phosphate (S3P) to produce enolpyruvyl shikimate-3-phosphate and inorganic phosphate. The chain is 3-phosphoshikimate 1-carboxyvinyltransferase from Citrifermentans bemidjiense (strain ATCC BAA-1014 / DSM 16622 / JCM 12645 / Bem) (Geobacter bemidjiensis).